The chain runs to 391 residues: MFLKNIFIALAIALLVDASPAKRSPGFVTLDFDVIKTPVNATGQEGKVKRQAIPVTLNNELVSYAADITIGSNKQKFNVIVDTGSSDLWVPDASVTCDKPRPGQSADFCKGKGIYTPKSSTTSQNLGSPFYIGYGDGSSSQGTLYKDTVGFGGASITKQVFADITKTSIPQGILGIGYKTNEAAGDYDNVPVTLKNQGVIAKNAYSLYLNSPNAATGQIIFGGVDKAKYSGSLIAVPVTSDRELRITLNSLKAVGKNINGNIDVLLDSGTTITYLQQDVAQDIIDAFQAELKSDGQGHTFYVTDCQTSGTVDFNFDNNAKISVPASEFTAPLSYANGQPYPKCQLLLGISDANILGDNFLRSAYLVYDLDDDKISLAQVKYTSASNIAALT.

An N-terminal signal peptide occupies residues 1–18; the sequence is MFLKNIFIALAIALLVDA. Positions 19-50 are cleaved as a propeptide — activation peptide; the sequence is SPAKRSPGFVTLDFDVIKTPVNATGQEGKVKR. The N-linked (GlcNAc...) asparagine glycan is linked to asparagine 40. One can recognise a Peptidase A1 domain in the interval 64 to 377; that stretch reads YAADITIGSN…DLDDDKISLA (314 aa). Aspartate 82 is a catalytic residue. 82–84 is a binding site for pepstatin A; that stretch reads DTG. An intrachain disulfide couples cysteine 97 to cysteine 109. 2 residues coordinate Zn(2+): aspartate 241 and aspartate 263. The active site involves aspartate 267. Residue 267–271 participates in pepstatin A binding; sequence DSGTT. A disulfide bridge links cysteine 305 with cysteine 343.

The protein belongs to the peptidase A1 family. As to quaternary structure, monomer.

It localises to the secreted. The enzyme catalyses Preferential cleavage at the carboxyl of hydrophobic amino acids, but fails to cleave 15-Leu-|-Tyr-16, 16-Tyr-|-Leu-17 and 24-Phe-|-Phe-25 of insulin B chain. Activates trypsinogen, and degrades keratin.. Inhibited by pepstatin A analogs and squash aspartic peptidase inhibitor (SQAPI). Its function is as follows. Secreted aspartic peptidases (SAPs) are a group of ten acidic hydrolases considered as key virulence factors. These enzymes supply the fungus with nutrient amino acids as well as are able to degrade the selected host's proteins involved in the immune defense. Induces host inflammatory cytokine production in a proteolytic activity-independent way. Plays a role in tissue damage during superficial infection. Moreover, acts toward human hemoglobin though limited proteolysis to generate a variety of antimicrobial hemocidins, enabling to compete with the other microorganisms of the same physiological niche using the microbicidal peptides generated from the host protein. In terms of biological role, plays a key role in defense against host by cleaving histatin-5 (Hst 5), a peptide from human saliva that carries out fungicidal activity. The cleavage rate decreases in an order of SAP2 &gt; SAP9 &gt; SAP3 &gt; SAP7 &gt; SAP4 &gt; SAP1 &gt; SAP8. The first cleavage occurs between residues 'Lys-17' and 'His-18' of Hst 5, giving DSHAKRHHGYKRKFHEK and HHSHRGY peptides. Further fragmentation by SAP1 results in AKRHHGYKRKFHEK and AKRHHGY products. This chain is Secreted aspartic protease 1, found in Candida albicans (Yeast).